A 388-amino-acid chain; its full sequence is Lipid-A-disaccharide synthase (388 aa).

This sequence belongs to the LpxB family.

It catalyses the reaction a lipid X + a UDP-2-N,3-O-bis[(3R)-3-hydroxyacyl]-alpha-D-glucosamine = a lipid A disaccharide + UDP + H(+). It functions in the pathway bacterial outer membrane biogenesis; LPS lipid A biosynthesis. Condensation of UDP-2,3-diacylglucosamine and 2,3-diacylglucosamine-1-phosphate to form lipid A disaccharide, a precursor of lipid A, a phosphorylated glycolipid that anchors the lipopolysaccharide to the outer membrane of the cell. The chain is Lipid-A-disaccharide synthase from Sulfurihydrogenibium sp. (strain YO3AOP1).